The chain runs to 419 residues: MDLLAELQWRGLVNQTTDEDGLRKLLNEERVTLYCGFDPTADSLHIGNLAAILTLRRFQQAGHRPIALVGGATGLIGDPSGKKSERTLNAKETVEAWSARIKEQLGRFLDFEADGNPAKIKNNYDWIGPLDVITFLRDVGKHFSVNYMMAKESVQSRIETGISFTEFSYMMLQAYDFLRLYETEGCRLQIGGSDQWGNITAGLELIRKTKGEARAFGLTIPLVTKADGTKFGKTESGTIWLDKEKTSPYEFYQFWINTDDRDVIRYLKYFTFLSKEEIEALEQELREAPEKRAAQKALAEEVTKLVHGEEALRQAIRISEALFSGDIANLTAAEIEQGFKDVPSFVHEGGDVPLVELLVSAGISPSKRQAREDIQSGAIYVNGERLQDVGAILTAEHRLEGRFTVIRRGKKKYYLIRYA.

Residue tyrosine 34 participates in L-tyrosine binding. The 'HIGH' region motif lies at 39–48 (PTADSLHIGN). 2 residues coordinate L-tyrosine: tyrosine 169 and glutamine 173. Residues 230–234 (KFGKT) carry the 'KMSKS' region motif. Residue lysine 233 participates in ATP binding. Residues 352–419 (VPLVELLVSA…KKKYYLIRYA (68 aa)) enclose the S4 RNA-binding domain.

Belongs to the class-I aminoacyl-tRNA synthetase family. TyrS type 1 subfamily. As to quaternary structure, homodimer.

Its subcellular location is the cytoplasm. It carries out the reaction tRNA(Tyr) + L-tyrosine + ATP = L-tyrosyl-tRNA(Tyr) + AMP + diphosphate + H(+). Its function is as follows. Catalyzes the attachment of tyrosine to tRNA(Tyr) in a two-step reaction: tyrosine is first activated by ATP to form Tyr-AMP and then transferred to the acceptor end of tRNA(Tyr). In Geobacillus kaustophilus (strain HTA426), this protein is Tyrosine--tRNA ligase.